The primary structure comprises 326 residues: MSPAAAAEPDGVRGDRHVSKLIFFLFVIGAILLCVGVLLSIFGFQACQYKTFPDCSMMLKIAGPACAVVGLGAVILARSRARLQQTEERLRGNNQADSDRPFLCGESRQFVQCLIFGFLFLTSGMLISVLGIWVPGCGSDWMQESLNETDTADSEPQICGFLSLQILGPLIVLVGLCFFVVAHVKKRSNLNGDQDASESEERQTQSLEPIQVTVGDAVIIFPPPPPPYFPESSASAAARSPGTDGLLPDESPPSYYSIFQSGSPTPEGQGAASERDCELIYTISGTASSSETSHTLHLLSELPPRYEEKETATTTSLSPSSEPSPP.

The next 4 membrane-spanning stretches (helical) occupy residues Ile22–Phe42, Met57–Ala77, Leu114–Val134, and Phe161–Val181. Positions Phe229–Pro326 are disordered. Residues Pro230 to Ser240 are compositionally biased toward low complexity. The segment covering Ser257 to Pro266 has biased composition (polar residues). 2 stretches are compositionally biased toward low complexity: residues Ser288 to Leu302 and Ala312 to Pro326.

The protein resides in the membrane. This Bos taurus (Bovine) protein is Transmembrane protein 171 (TMEM171).